We begin with the raw amino-acid sequence, 264 residues long: MLYIIGLGLYDENDISIKGLRAIEDCDEVYAEFYTAMLQGSSLSAIERRIGRSVKVLGRGEIEEERIPIERALELDVALLVAGDPLVATTHTELLIDAHRRGIETRVIHSSSIISAAPGLAGLQAYKFGRIITIPFTSDNYFPTSPYTNIGENLKAGSHSLVLLDIEAHRNRYMTATEGLRYLLKASEKLDDGTISGETLAVVIARAGSEKPLVRADKIATLVEEDFGDPLHCLVVPAGLHFIEADYLVEIAGAPRAVVERMIL.

S-adenosyl-L-methionine contacts are provided by residues leucine 9, aspartate 84, valine 87, 112 to 113 (SI), leucine 164, alanine 207, and histidine 232.

The protein belongs to the diphthine synthase family. In terms of assembly, homodimer.

It catalyses the reaction 2-[(3S)-amino-3-carboxypropyl]-L-histidyl-[translation elongation factor 2] + 3 S-adenosyl-L-methionine = diphthine-[translation elongation factor 2] + 3 S-adenosyl-L-homocysteine + 3 H(+). Its pathway is protein modification; peptidyl-diphthamide biosynthesis. Its function is as follows. S-adenosyl-L-methionine-dependent methyltransferase that catalyzes the trimethylation of the amino group of the modified target histidine residue in translation elongation factor 2 (EF-2), to form an intermediate called diphthine. The three successive methylation reactions represent the second step of diphthamide biosynthesis. The chain is Diphthine synthase from Methanothermobacter thermautotrophicus (strain ATCC 29096 / DSM 1053 / JCM 10044 / NBRC 100330 / Delta H) (Methanobacterium thermoautotrophicum).